The following is an 809-amino-acid chain: Probable disease resistance protein At5g66900 (809 aa).

Positions 1–150 (MNDWASLGIG…LSKRMDLLSV (150 aa)) constitute an RPW8 domain. Residues 50–86 (PLTQKIDSMQKELDFGVKELKELRDTIERADVAVRKF) are a coiled coil. 2 NB-ARC domains span residues 153-280 (PVFR…DDVW) and 339-438 (SPDE…DMWV). Residue 194-201 (APPGCGKT) participates in ATP binding. Positions 494–515 (QSEFKENLERKRLNLEILENTF) form a coiled coil. LRR repeat units follow at residues 650–672 (KLQE…ISEI), 674–696 (SLKT…IGNL), 698–720 (RLEV…TEGL), and 722–744 (NLRF…IGKL).

Belongs to the disease resistance NB-LRR family.

Its function is as follows. Probable disease resistance protein. The sequence is that of Probable disease resistance protein At5g66900 from Arabidopsis thaliana (Mouse-ear cress).